The primary structure comprises 113 residues: UPF0251 protein TK0562 (113 aa).

The protein belongs to the UPF0251 family.

This is UPF0251 protein TK0562 from Thermococcus kodakarensis (strain ATCC BAA-918 / JCM 12380 / KOD1) (Pyrococcus kodakaraensis (strain KOD1)).